The chain runs to 86 residues: Large ribosomal subunit protein bL27 (86 aa).

It belongs to the bacterial ribosomal protein bL27 family.

The polypeptide is Large ribosomal subunit protein bL27 (Xanthomonas oryzae pv. oryzae (strain PXO99A)).